The following is a 643-amino-acid chain: UvrABC system protein C (643 aa).

The 80-residue stretch at 25 to 104 (AEPGVYFMRD…IKQHQPHFNV (80 aa)) folds into the GIY-YIG domain. Residues 214–249 (SELVELLEAQMLQAAENLEFEKAAKIRDQIRGLEGL) form the UVR domain.

This sequence belongs to the UvrC family. Interacts with UvrB in an incision complex.

The protein resides in the cytoplasm. The UvrABC repair system catalyzes the recognition and processing of DNA lesions. UvrC both incises the 5' and 3' sides of the lesion. The N-terminal half is responsible for the 3' incision and the C-terminal half is responsible for the 5' incision. In Synechococcus elongatus (strain ATCC 33912 / PCC 7942 / FACHB-805) (Anacystis nidulans R2), this protein is UvrABC system protein C.